We begin with the raw amino-acid sequence, 207 residues long: ATP-dependent Clp protease proteolytic subunit (207 aa).

Catalysis depends on Ser111, which acts as the Nucleophile. Residue His136 is part of the active site.

This sequence belongs to the peptidase S14 family. In terms of assembly, fourteen ClpP subunits assemble into 2 heptameric rings which stack back to back to give a disk-like structure with a central cavity, resembling the structure of eukaryotic proteasomes.

It is found in the cytoplasm. It catalyses the reaction Hydrolysis of proteins to small peptides in the presence of ATP and magnesium. alpha-casein is the usual test substrate. In the absence of ATP, only oligopeptides shorter than five residues are hydrolyzed (such as succinyl-Leu-Tyr-|-NHMec, and Leu-Tyr-Leu-|-Tyr-Trp, in which cleavage of the -Tyr-|-Leu- and -Tyr-|-Trp bonds also occurs).. Its function is as follows. Cleaves peptides in various proteins in a process that requires ATP hydrolysis. Has a chymotrypsin-like activity. Plays a major role in the degradation of misfolded proteins. This Photorhabdus laumondii subsp. laumondii (strain DSM 15139 / CIP 105565 / TT01) (Photorhabdus luminescens subsp. laumondii) protein is ATP-dependent Clp protease proteolytic subunit.